A 171-amino-acid polypeptide reads, in one-letter code: MEYFDVARILTTHGLNGEVKVNVITDFPEERFAEGMHLSLRSDTNRTLTVEKSRPFKQFWLIQFKEITDIDQAEKLRGQILVVSEEDRGELPDGVYYYKDIFDCDVIDEETGKRIGKIVDIQSPGANDIWLVREDDGKEYWIPNIADVVKKVDVAAKKVYVELMEGLRDED.

The PRC barrel domain maps to 93 to 167; that stretch reads DGVYYYKDIF…KVYVELMEGL (75 aa).

Belongs to the RimM family. Binds ribosomal protein uS19.

Its subcellular location is the cytoplasm. An accessory protein needed during the final step in the assembly of 30S ribosomal subunit, possibly for assembly of the head region. Essential for efficient processing of 16S rRNA. May be needed both before and after RbfA during the maturation of 16S rRNA. It has affinity for free ribosomal 30S subunits but not for 70S ribosomes. This Lactobacillus helveticus (strain DPC 4571) protein is Ribosome maturation factor RimM.